Here is a 618-residue protein sequence, read N- to C-terminus: Medium-chain acyl-CoA ligase ACSF2, mitochondrial (618 aa).

Residues Met1–Phe44 constitute a mitochondrion transit peptide. The residue at position 182 (Lys182) is an N6-acetyllysine. N6-acetyllysine; alternate is present on Lys185. Lys185 carries the N6-succinyllysine; alternate modification. Thr266–Lys274 serves as a coordination point for ATP. Residues Lys343 and Lys401 each carry the N6-acetyllysine modification. An N6-succinyllysine modification is found at Lys481. The ATP site is built by Asp496 and Arg511. Lys513 carries the N6-acetyllysine modification. Lys547 and Lys573 each carry N6-acetyllysine; alternate. N6-succinyllysine; alternate is present on residues Lys547 and Lys573. Residue Lys602 participates in ATP binding. Position 602 is an N6-succinyllysine (Lys602).

This sequence belongs to the ATP-dependent AMP-binding enzyme family.

It is found in the mitochondrion. The enzyme catalyses a medium-chain fatty acid + ATP + CoA = a medium-chain fatty acyl-CoA + AMP + diphosphate. It catalyses the reaction octanoate + ATP + CoA = octanoyl-CoA + AMP + diphosphate. In terms of biological role, acyl-CoA synthases catalyze the initial reaction in fatty acid metabolism, by forming a thioester with CoA. Has some preference toward medium-chain substrates. Plays a role in adipocyte differentiation. The chain is Medium-chain acyl-CoA ligase ACSF2, mitochondrial from Macaca fascicularis (Crab-eating macaque).